The chain runs to 569 residues: Dihydroxy-acid dehydratase (569 aa).

A [2Fe-2S] cluster-binding site is contributed by Cys61. Asp93 is a Mg(2+) binding site. Residue Cys134 participates in [2Fe-2S] cluster binding. Residues Asp135 and Lys136 each contribute to the Mg(2+) site. Lys136 is subject to N6-carboxylysine. Residue Cys211 coordinates [2Fe-2S] cluster. Glu462 contacts Mg(2+). Catalysis depends on Ser488, which acts as the Proton acceptor.

The protein belongs to the IlvD/Edd family. As to quaternary structure, homodimer. It depends on [2Fe-2S] cluster as a cofactor. Mg(2+) serves as cofactor.

The catalysed reaction is (2R)-2,3-dihydroxy-3-methylbutanoate = 3-methyl-2-oxobutanoate + H2O. It carries out the reaction (2R,3R)-2,3-dihydroxy-3-methylpentanoate = (S)-3-methyl-2-oxopentanoate + H2O. It functions in the pathway amino-acid biosynthesis; L-isoleucine biosynthesis; L-isoleucine from 2-oxobutanoate: step 3/4. It participates in amino-acid biosynthesis; L-valine biosynthesis; L-valine from pyruvate: step 3/4. Functionally, functions in the biosynthesis of branched-chain amino acids. Catalyzes the dehydration of (2R,3R)-2,3-dihydroxy-3-methylpentanoate (2,3-dihydroxy-3-methylvalerate) into 2-oxo-3-methylpentanoate (2-oxo-3-methylvalerate) and of (2R)-2,3-dihydroxy-3-methylbutanoate (2,3-dihydroxyisovalerate) into 2-oxo-3-methylbutanoate (2-oxoisovalerate), the penultimate precursor to L-isoleucine and L-valine, respectively. The polypeptide is Dihydroxy-acid dehydratase (Tropheryma whipplei (strain TW08/27) (Whipple's bacillus)).